Here is a 208-residue protein sequence, read N- to C-terminus: MRGGEELDGFEGEASSTSMISGASSPYQPTTEPVSQRRGLAGLRCDPDYLRGALGRLKVAQVILALIAFICIETIMECSPCEGLYFFEFVSCSAFVVTGVLLILFSLNLHMRIPQINWNLTDLVNTGLSTFFFFIASIVLAALNHKTGAEIAAVIFGFLATAAYAVSTFLAMQKWRVSVRQQSTNDYIRARTESRDVDSRPEIQRLDT.

The segment covering 1–11 has biased composition (acidic residues); that stretch reads MRGGEELDGFE. The segment at 1 to 38 is disordered; the sequence is MRGGEELDGFEGEASSTSMISGASSPYQPTTEPVSQRR. Residues 15-25 are compositionally biased toward low complexity; the sequence is SSTSMISGASS. Residues 49–176 enclose the MARVEL domain; the sequence is YLRGALGRLK…STFLAMQKWR (128 aa). 4 helical membrane-spanning segments follow: residues 59–79, 85–105, 123–143, and 151–171; these read VAQVILALIAFICIETIMECS, YFFEFVSCSAFVVTGVLLILF, LVNTGLSTFFFFIASIVLAAL, and IAAVIFGFLATAAYAVSTFLA. Phosphoserine is present on Ser194.

The protein belongs to the chemokine-like factor family. As to quaternary structure, interacts with PD1L1 and CMTM6.

It is found in the membrane. Acts as a backup for CMTM6 to regulate plasma membrane expression of PD-L1/CD274, an immune inhibitory ligand critical for immune tolerance to self and antitumor immunity. May protect PD-L1/CD274 from being polyubiquitinated and targeted for degradation. The protein is CKLF-like MARVEL transmembrane domain-containing protein 4 of Mus musculus (Mouse).